The following is a 211-amino-acid chain: Large ribosomal subunit protein uL3 (211 aa).

This sequence belongs to the universal ribosomal protein uL3 family. As to quaternary structure, part of the 50S ribosomal subunit. Forms a cluster with proteins L14 and L19.

In terms of biological role, one of the primary rRNA binding proteins, it binds directly near the 3'-end of the 23S rRNA, where it nucleates assembly of the 50S subunit. The chain is Large ribosomal subunit protein uL3 from Geotalea daltonii (strain DSM 22248 / JCM 15807 / FRC-32) (Geobacter daltonii).